The following is a 261-amino-acid chain: Glucose 1-dehydrogenase 1 (261 aa).

11 to 35 (VITGSSTGLGKAMAIRFATEKAKVV) is an NADP(+) binding site. A substrate-binding site is contributed by serine 145. Tyrosine 158 functions as the Proton acceptor in the catalytic mechanism.

Belongs to the short-chain dehydrogenases/reductases (SDR) family. As to quaternary structure, homotetramer.

It carries out the reaction D-glucose + NAD(+) = D-glucono-1,5-lactone + NADH + H(+). It catalyses the reaction D-glucose + NADP(+) = D-glucono-1,5-lactone + NADPH + H(+). Functionally, may play some role in spore germination. The polypeptide is Glucose 1-dehydrogenase 1 (gdhI) (Priestia megaterium (Bacillus megaterium)).